A 432-amino-acid polypeptide reads, in one-letter code: Glutamate-1-semialdehyde 2,1-aminomutase (432 aa).

Position 271 is an N6-(pyridoxal phosphate)lysine (Lys271).

Belongs to the class-III pyridoxal-phosphate-dependent aminotransferase family. HemL subfamily. As to quaternary structure, homodimer. Pyridoxal 5'-phosphate is required as a cofactor.

Its subcellular location is the cytoplasm. It carries out the reaction (S)-4-amino-5-oxopentanoate = 5-aminolevulinate. Its pathway is porphyrin-containing compound metabolism; protoporphyrin-IX biosynthesis; 5-aminolevulinate from L-glutamyl-tRNA(Glu): step 2/2. It participates in porphyrin-containing compound metabolism; chlorophyll biosynthesis. The protein is Glutamate-1-semialdehyde 2,1-aminomutase of Prochlorococcus marinus (strain MIT 9211).